The primary structure comprises 329 residues: GMP reductase (329 aa).

Cys-178 serves as the catalytic Thioimidate intermediate. 207-230 provides a ligand contact to NADP(+); that stretch reads VIADGGIRTHGDVAKSIRMGATMV.

This sequence belongs to the IMPDH/GMPR family. GuaC type 2 subfamily.

The enzyme catalyses IMP + NH4(+) + NADP(+) = GMP + NADPH + 2 H(+). Catalyzes the irreversible NADPH-dependent deamination of GMP to IMP. It functions in the conversion of nucleobase, nucleoside and nucleotide derivatives of G to A nucleotides, and in maintaining the intracellular balance of A and G nucleotides. This Lactococcus lactis subsp. cremoris (strain MG1363) protein is GMP reductase.